We begin with the raw amino-acid sequence, 211 residues long: MSDQVKIPRATLKRLPLYYRFVSSLKSKGIDRVNSKAISDALQIDSATIRRDFSYFGELGKKGYGYNIDSLLDFFKSELSESDMIKIAIVGVGNLGKALLTYNFSIHDDMTITEAFDVKEDVIGQKIGNVIVKDNDELITTLKKEEIDVVILTTPERVAQKVADELVQAGVKGILNFTPGRINTPSDVQVHQIDLGIELQSLLFFMKNYSE.

The H-T-H motif DNA-binding region spans 17 to 56 (LYYRFVSSLKSKGIDRVNSKAISDALQIDSATIRRDFSYF). 91–96 (GVGNLG) serves as a coordination point for NAD(+).

The protein belongs to the transcriptional regulatory Rex family. As to quaternary structure, homodimer.

Its subcellular location is the cytoplasm. Functionally, modulates transcription in response to changes in cellular NADH/NAD(+) redox state. The chain is Redox-sensing transcriptional repressor Rex from Staphylococcus aureus (strain Mu3 / ATCC 700698).